Here is a 166-residue protein sequence, read N- to C-terminus: Lipoprotein signal peptidase (166 aa).

The next 4 membrane-spanning stretches (helical) occupy residues 9 to 29 (ASGA…FDQL), 45 to 65 (ALTS…FGFL), 71 to 91 (WQRW…CFLL), and 100 to 120 (FSLS…DRLV). Residues aspartate 126 and aspartate 144 contribute to the active site. The chain crosses the membrane as a helical span at residues 135–155 (WHFPAFNLADSAITIGAVLLI).

The protein belongs to the peptidase A8 family.

It localises to the cell inner membrane. It catalyses the reaction Release of signal peptides from bacterial membrane prolipoproteins. Hydrolyzes -Xaa-Yaa-Zaa-|-(S,diacylglyceryl)Cys-, in which Xaa is hydrophobic (preferably Leu), and Yaa (Ala or Ser) and Zaa (Gly or Ala) have small, neutral side chains.. It participates in protein modification; lipoprotein biosynthesis (signal peptide cleavage). Functionally, this protein specifically catalyzes the removal of signal peptides from prolipoproteins. This Burkholderia multivorans (strain ATCC 17616 / 249) protein is Lipoprotein signal peptidase.